Here is a 221-residue protein sequence, read N- to C-terminus: Aspartic protease inhibitor 1 (221 aa).

Positions 1-23 are cleaved as a signal peptide; that stretch reads MMKCLFFLCLCLFPILVFSSTFT. The propeptide occupies 24–32; that stretch reads SQNPINLPS. Positions 26–31 match the Vacuolar targeting signal motif; it reads NPINLP. Asn-51 carries N-linked (GlcNAc...) asparagine glycosylation. Cystine bridges form between Cys-80–Cys-125 and Cys-174–Cys-186.

The protein belongs to the protease inhibitor I3 (leguminous Kunitz-type inhibitor) family. As to expression, tubers, young leaves and flower bud. Not detected in root, stem or mature leaves.

Its subcellular location is the vacuole. In terms of biological role, inhibitor of cathepsin D (aspartic protease). May also inhibit trypsin and chymotrypsin (serine proteases). Protects the plant by inhibiting proteases of invading organisms. The polypeptide is Aspartic protease inhibitor 1 (Solanum tuberosum (Potato)).